Consider the following 330-residue polypeptide: MIISKQCSNCSFDVVATQFVQWLQSYRQQQQQSGNHHVVDIILQKIGCGGDIEFIDINLWWSQCRTIDEGDAPHSVVRGDSPYAYITNVSDNEISDHLLVTTSQYNASMFRKLFRHIEVVPHAYDPLEVSVVDKVKEKKFDVITIGYDTADDHKGLTVARKVALDLSLRYVEVSNQCDNVGVNASTSQTQIQLADNMICIPFMTLTREDVYRLIAQSRFYLALSHTEGFGLPVLESMVAGTVPIYVDGHAFHEYAKGIPIPAYSDKRVDWYNYEYEDVVEVVKSAMSTSQSEYNELSMRVKEESRHYFHPDVVYRKLINIVNKNVKSNLF.

It belongs to the glycosyltransferase group 1 family. Glycosyltransferase 4 subfamily.

The polypeptide is Putative glycosyltransferase ORF330 (Acidianus filamentous virus 2 (isolate Italy/Pozzuoli) (AFV-2)).